Here is a 249-residue protein sequence, read N- to C-terminus: Metallo-beta-lactamase type 2 (249 aa).

The first 22 residues, 1 to 22 (MLKKIKISLILALGLTSLQAFG), serve as a signal peptide directing secretion. Positions 98, 100, 102, 161, and 180 each coordinate Zn(2+). Lys183 serves as a coordination point for substrate. A Zn(2+)-binding site is contributed by His222.

Belongs to the metallo-beta-lactamase superfamily. Class-B beta-lactamase family. As to quaternary structure, monomer. It depends on Zn(2+) as a cofactor.

The protein localises to the periplasm. It catalyses the reaction a beta-lactam + H2O = a substituted beta-amino acid. With respect to regulation, inhibited by chelating agents such as EDTA, 1-10 phenanthroline and pyridine-2,6-dicarboxylic acid. In terms of biological role, confers resistance to the different beta-lactams antibiotics (penicillin, cephalosporin and carbapenem) via the hydrolysis of the beta-lactam ring. This Elizabethkingia meningoseptica (Chryseobacterium meningosepticum) protein is Metallo-beta-lactamase type 2 (blaB1).